The primary structure comprises 238 residues: Serine protease SplA (238 aa).

An N-terminal signal peptide occupies residues 1-38; it reads MNKNVMVKGLTALTILTILTSLGFAENISNQPHSIAKA. Catalysis depends on charge relay system residues histidine 77, aspartate 116, and serine 192.

It belongs to the peptidase S1B family.

The protein resides in the secreted. The polypeptide is Serine protease SplA (splA) (Staphylococcus aureus (strain COL)).